A 516-amino-acid chain; its full sequence is Anthranilate synthase component 1 (516 aa).

Residues S56 and 283–285 (PYM) each bind L-tryptophan. 324–325 (GT) serves as a coordination point for chorismate. Residue E351 coordinates Mg(2+). Residues Y439, R459, 473-475 (GGG), and G475 contribute to the chorismate site. E488 is a binding site for Mg(2+).

This sequence belongs to the anthranilate synthase component I family. As to quaternary structure, heterotetramer consisting of two non-identical subunits: a beta subunit (TrpG) and a large alpha subunit (TrpE). The cofactor is Mg(2+).

It catalyses the reaction chorismate + L-glutamine = anthranilate + pyruvate + L-glutamate + H(+). The protein operates within amino-acid biosynthesis; L-tryptophan biosynthesis; L-tryptophan from chorismate: step 1/5. With respect to regulation, feedback inhibited by tryptophan. Functionally, part of a heterotetrameric complex that catalyzes the two-step biosynthesis of anthranilate, an intermediate in the biosynthesis of L-tryptophan. In the first step, the glutamine-binding beta subunit (TrpG) of anthranilate synthase (AS) provides the glutamine amidotransferase activity which generates ammonia as a substrate that, along with chorismate, is used in the second step, catalyzed by the large alpha subunit of AS (TrpE) to produce anthranilate. In the absence of TrpG, TrpE can synthesize anthranilate directly from chorismate and high concentrations of ammonia. The polypeptide is Anthranilate synthase component 1 (trpE) (Mycobacterium bovis (strain ATCC BAA-935 / AF2122/97)).